The chain runs to 525 residues: NAD(P)H-quinone oxidoreductase chain 4-2 (525 aa).

Transmembrane regions (helical) follow at residues Phe6–Ile26, Trp36–Ser56, Leu91–Leu111, Leu115–Asp135, Leu137–Trp157, Phe169–Phe189, Leu212–His232, Thr243–Ile263, Phe277–Phe297, Met314–Leu334, Gln335–Asp355, Ile375–Ala397, Val417–Met437, and Val464–Leu484.

Belongs to the complex I subunit 4 family.

Its subcellular location is the cellular thylakoid membrane. The catalysed reaction is a plastoquinone + NADH + (n+1) H(+)(in) = a plastoquinol + NAD(+) + n H(+)(out). It carries out the reaction a plastoquinone + NADPH + (n+1) H(+)(in) = a plastoquinol + NADP(+) + n H(+)(out). Its function is as follows. NDH-1 shuttles electrons from NAD(P)H, via FMN and iron-sulfur (Fe-S) centers, to quinones in the respiratory chain. The immediate electron acceptor for the enzyme in this species is believed to be plastoquinone. Couples the redox reaction to proton translocation (for every two electrons transferred, four hydrogen ions are translocated across the cytoplasmic membrane), and thus conserves the redox energy in a proton gradient. The sequence is that of NAD(P)H-quinone oxidoreductase chain 4-2 (ndhD2) from Nostoc sp. (strain PCC 7120 / SAG 25.82 / UTEX 2576).